The sequence spans 358 residues: Glucose 1-dehydrogenase (358 aa).

C38 contributes to the Zn(2+) binding site. Substrate is bound at residue T40. The Zn(2+) site is built by H65, E66, C92, C95, C98, and C106. 3 residues coordinate substrate: E113, E149, and N153. E149 serves as a coordination point for Zn(2+). Residues 187–190, 209–211, 268–270, 296–298, and K342 contribute to the NADP(+) site; these read SGPI, NRR, FGT, and SVN. Position 298 (N298) interacts with substrate.

Belongs to the zinc-containing alcohol dehydrogenase family. Glucose 1-dehydrogenase subfamily. It depends on Zn(2+) as a cofactor.

The enzyme catalyses D-glucose + NAD(+) = D-glucono-1,5-lactone + NADH + H(+). It carries out the reaction D-glucose + NADP(+) = D-glucono-1,5-lactone + NADPH + H(+). In terms of biological role, catalyzes the NAD(P)(+)-dependent oxidation of D-glucose to D-gluconate via gluconolactone. Can utilize both NAD(+) and NADP(+) as electron acceptor. Is involved in the degradation of glucose through a non-phosphorylative variant of the Entner-Doudoroff pathway. This is Glucose 1-dehydrogenase from Metallosphaera sedula (strain ATCC 51363 / DSM 5348 / JCM 9185 / NBRC 15509 / TH2).